The sequence spans 339 residues: DNA-directed RNA polymerase subunit alpha (339 aa).

An alpha N-terminal domain (alpha-NTD) region spans residues 1-235 (MVREEVAVST…DLFIPFLHGE (235 aa)). The interval 267-339 (KAIALECIFI…FTIDLPKNKF (73 aa)) is alpha C-terminal domain (alpha-CTD).

This sequence belongs to the RNA polymerase alpha chain family. As to quaternary structure, in plastids the minimal PEP RNA polymerase catalytic core is composed of four subunits: alpha, beta, beta', and beta''. When a (nuclear-encoded) sigma factor is associated with the core the holoenzyme is formed, which can initiate transcription.

The protein resides in the plastid. The protein localises to the chloroplast. It catalyses the reaction RNA(n) + a ribonucleoside 5'-triphosphate = RNA(n+1) + diphosphate. In terms of biological role, DNA-dependent RNA polymerase catalyzes the transcription of DNA into RNA using the four ribonucleoside triphosphates as substrates. In Drimys granadensis, this protein is DNA-directed RNA polymerase subunit alpha.